The chain runs to 144 residues: Large ribosomal subunit protein uL16m (144 aa).

Belongs to the universal ribosomal protein uL16 family.

It is found in the mitochondrion. The protein is Large ribosomal subunit protein uL16m (mrpl16) of Dictyostelium discoideum (Social amoeba).